Reading from the N-terminus, the 205-residue chain is Thymidylate kinase (205 aa).

Residue 10–17 (GLEGAGKS) coordinates ATP.

It belongs to the thymidylate kinase family.

The catalysed reaction is dTMP + ATP = dTDP + ADP. Functionally, phosphorylation of dTMP to form dTDP in both de novo and salvage pathways of dTTP synthesis. This Idiomarina loihiensis (strain ATCC BAA-735 / DSM 15497 / L2-TR) protein is Thymidylate kinase.